The primary structure comprises 263 residues: Chymotrypsinogen B (263 aa).

The signal sequence occupies residues Met-1–Gly-18. 5 disulfide bridges follow: Cys-19-Cys-140, Cys-60-Cys-76, Cys-154-Cys-219, Cys-186-Cys-200, and Cys-209-Cys-238. Residues Ile-34–Glu-261 form the Peptidase S1 domain. Residue His-75 is the Charge relay system of the active site. Ser-93 carries the phosphoserine modification. Catalysis depends on Asp-120, which acts as the Charge relay system. Ser-213 functions as the Charge relay system in the catalytic mechanism.

It belongs to the peptidase S1 family.

It is found in the secreted. The protein resides in the extracellular space. The catalysed reaction is Preferential cleavage: Tyr-|-Xaa, Trp-|-Xaa, Phe-|-Xaa, Leu-|-Xaa.. The chain is Chymotrypsinogen B (Ctrb1) from Mus musculus (Mouse).